A 290-amino-acid polypeptide reads, in one-letter code: Aquaporin PIP2-1 (290 aa).

Positions 1-20 (MGKDDVIESGAGGGEFAAKD) are disordered. Helical transmembrane passes span 43–63 (AVIA…ATVI) and 80–100 (CGGV…FVLV). The NPA 1 signature appears at 112–114 (NPA). A run of 3 helical transmembrane segments spans residues 131 to 151 (LLYI…VKAF), 173 to 193 (GTGL…VFSA), and 205 to 225 (VPVL…LATI). An NPA 2 motif is present at residues 233–235 (NPA). The chain crosses the membrane as a helical span at residues 255–275 (IFWVGPLVGAAIAAFYHQYIL).

This sequence belongs to the MIP/aquaporin (TC 1.A.8) family. PIP (TC 1.A.8.11) subfamily. Homomers. Can interact with PIP1-2 to form heteromers. As to expression, expressed in roots.

The protein resides in the cell membrane. In terms of biological role, water channel required to facilitate the transport of water across cell membrane. Active as homomers. Increased activity when heteromerization with PIP1-2. In Zea mays (Maize), this protein is Aquaporin PIP2-1 (PIP2-1).